Reading from the N-terminus, the 427-residue chain is Enolase (427 aa).

A (2R)-2-phosphoglycerate-binding site is contributed by glutamine 163. Residue glutamate 205 is the Proton donor of the active site. Positions 242, 285, and 312 each coordinate Mg(2+). The (2R)-2-phosphoglycerate site is built by lysine 337, arginine 366, serine 367, and lysine 388. Residue lysine 337 is the Proton acceptor of the active site.

It belongs to the enolase family. Mg(2+) serves as cofactor.

The protein localises to the cytoplasm. It is found in the secreted. Its subcellular location is the cell surface. It catalyses the reaction (2R)-2-phosphoglycerate = phosphoenolpyruvate + H2O. It functions in the pathway carbohydrate degradation; glycolysis; pyruvate from D-glyceraldehyde 3-phosphate: step 4/5. Its function is as follows. Catalyzes the reversible conversion of 2-phosphoglycerate (2-PG) into phosphoenolpyruvate (PEP). It is essential for the degradation of carbohydrates via glycolysis. This chain is Enolase, found in Leptothrix cholodnii (strain ATCC 51168 / LMG 8142 / SP-6) (Leptothrix discophora (strain SP-6)).